A 215-amino-acid chain; its full sequence is Peptidyl-tRNA hydrolase (215 aa).

Tyr-35 contacts tRNA. The active-site Proton acceptor is His-40. Tyr-86, Asn-88, and Asn-134 together coordinate tRNA.

It belongs to the PTH family. Monomer.

It is found in the cytoplasm. It carries out the reaction an N-acyl-L-alpha-aminoacyl-tRNA + H2O = an N-acyl-L-amino acid + a tRNA + H(+). In terms of biological role, hydrolyzes ribosome-free peptidyl-tRNAs (with 1 or more amino acids incorporated), which drop off the ribosome during protein synthesis, or as a result of ribosome stalling. Functionally, catalyzes the release of premature peptidyl moieties from peptidyl-tRNA molecules trapped in stalled 50S ribosomal subunits, and thus maintains levels of free tRNAs and 50S ribosomes. In Bordetella parapertussis (strain 12822 / ATCC BAA-587 / NCTC 13253), this protein is Peptidyl-tRNA hydrolase.